Here is a 152-residue protein sequence, read N- to C-terminus: uncharacterized protein (152 aa).

Residues 12–34 (ALLYLGGGLLAMIYGLITFFMAF) form a helical membrane-spanning segment.

To B.subtilis YfjD.

It is found in the membrane. This is an uncharacterized protein from Bacillus subtilis (strain 168).